The chain runs to 109 residues: ATPase inhibitor, mitochondrial (109 aa).

Residues 1–22 (MAGSSSLLRAGIRNVLLMQMRR) constitute a mitochondrion transit peptide. The interval 27-56 (LGELGKGAGKGGGGGGSVREAGGAFGKRQA) is N-terminal inhibitory region. Residues 27–109 (LGELGKGAGK…KSKIKKLNDD (83 aa)) are disordered. Residues 30-43 (LGKGAGKGGGGGGS) show a composition bias toward gly residues. 2 stretches are compositionally biased toward basic and acidic residues: residues 55 to 69 (QAAE…KEQE) and 77 to 98 (HHEE…EIER). Positions 71–109 (IASLRKHHEEEIRHHKGEIERLQKEIERHKSKIKKLNDD) form a coiled coil. Residues 78–109 (HEEEIRHHKGEIERLQKEIERHKSKIKKLNDD) form an antiparallel alpha-helical coiled coil region region. Residues 99–109 (HKSKIKKLNDD) show a composition bias toward basic residues.

It belongs to the ATPase inhibitor family. In terms of assembly, homodimer; represents the active form and is present at a pH value below 6.5. Homotetramer; represents the inactive form and is present at a pH value above 7.0.

It localises to the mitochondrion. Endogenous F(1)F(o)-ATPase inhibitor limiting ATP depletion when the mitochondrial membrane potential falls below a threshold and the F(1)F(o)-ATP synthase starts hydrolyzing ATP to pump protons out of the mitochondrial matrix. Required to avoid the consumption of cellular ATP when the F(1)F(o)-ATP synthase enzyme acts as an ATP hydrolase. Indirectly acts as a regulator of heme synthesis in erythroid tissues: regulates heme synthesis by modulating the mitochondrial pH and redox potential, allowing fech to efficiently catalyze the incorporation of iron into protoporphyrin IX to produce heme. This Xenopus tropicalis (Western clawed frog) protein is ATPase inhibitor, mitochondrial.